The chain runs to 358 residues: Acetylxylan esterase / glucomannan deacetylase (358 aa).

The N-terminal stretch at 1–18 (MKLLFPILLLTGSYFLSA) is a signal peptide. A lipid anchor (N-palmitoyl cysteine) is attached at C19. C19 carries S-diacylglycerol cysteine lipidation. S160 acts as the Nucleophile in catalysis. Residues D333 and H335 each act as charge relay system in the active site.

It belongs to the carbohydrate esterase 2 (CE2) family.

Its subcellular location is the cell membrane. The enzyme catalyses Deacetylation of xylans and xylo-oligosaccharides.. It functions in the pathway glycan degradation; xylan degradation. Functionally, involved in the degradation of plant cell wall polysaccharides. Catalyzes the deacetylation of acetylated birchwood xylan and glucomannan, with equal efficiency, and of the synthetic substrate 4-nitrophenyl acetate (4-NPAc). Does not bind cellulose, cellohexaose and beta-glucan. The protein is Acetylxylan esterase / glucomannan deacetylase of Cellvibrio japonicus (strain Ueda107) (Pseudomonas fluorescens subsp. cellulosa).